We begin with the raw amino-acid sequence, 356 residues long: tRNA-specific 2-thiouridylase MnmA 1 (356 aa).

Residues 8–15 (GMSGGVDS) and Met34 contribute to the ATP site. The Nucleophile role is filled by Cys103. Cys103 and Cys199 are joined by a disulfide. Gly127 serves as a coordination point for ATP. An interaction with tRNA region spans residues 149–151 (KDQ). The Cysteine persulfide intermediate role is filled by Cys199. Residues 305–306 (RY) form an interaction with tRNA region.

It belongs to the MnmA/TRMU family.

It is found in the cytoplasm. It carries out the reaction S-sulfanyl-L-cysteinyl-[protein] + uridine(34) in tRNA + AH2 + ATP = 2-thiouridine(34) in tRNA + L-cysteinyl-[protein] + A + AMP + diphosphate + H(+). Functionally, catalyzes the 2-thiolation of uridine at the wobble position (U34) of tRNA, leading to the formation of s(2)U34. This chain is tRNA-specific 2-thiouridylase MnmA 1, found in Clostridium botulinum (strain Langeland / NCTC 10281 / Type F).